The following is a 205-amino-acid chain: Recombination protein RecR (205 aa).

The C4-type zinc finger occupies 58–75; that stretch reads CSECQNVTDRDSDPCVLC. In terms of domain architecture, Toprim spans 83-182; the sequence is TVICVVESPV…AVSKIARGIP (100 aa).

This sequence belongs to the RecR family.

Functionally, may play a role in DNA repair. It seems to be involved in an RecBC-independent recombinational process of DNA repair. It may act with RecF and RecO. In Chlorobium phaeobacteroides (strain DSM 266 / SMG 266 / 2430), this protein is Recombination protein RecR.